The primary structure comprises 382 residues: Ferredoxin--NADP reductase, root isozyme 2, chloroplastic (382 aa).

The transit peptide at 1-64 directs the protein to the chloroplast; it reads MSHSAVSQAG…DGKRYPSTTI (64 aa). One can recognise an FAD-binding FR-type domain in the interval 97-225; it reads KESYTAKIVS…TGPSGKVMLL (129 aa). An intrachain disulfide couples Cys-200 to Cys-205. A Phosphoserine modification is found at Ser-201. Thr-233 is subject to Phosphothreonine. 235-253 serves as a coordination point for NADP(+); the sequence is IMIATGTGVAPYRGYLRRM.

The protein belongs to the ferredoxin--NADP reductase type 1 family. FAD is required as a cofactor. As to expression, expressed in shoots and roots. More abundant in roots than RFNR1.

The protein localises to the plastid. The protein resides in the chloroplast. The enzyme catalyses 2 reduced [2Fe-2S]-[ferredoxin] + NADP(+) + H(+) = 2 oxidized [2Fe-2S]-[ferredoxin] + NADPH. In terms of biological role, maintains the supply of reduced ferredoxin under non-photosynthetic conditions. The polypeptide is Ferredoxin--NADP reductase, root isozyme 2, chloroplastic (RFNR2) (Arabidopsis thaliana (Mouse-ear cress)).